We begin with the raw amino-acid sequence, 84 residues long: Small ribosomal subunit protein eS27w (84 aa).

The C4-type zinc-finger motif lies at 39–61; the sequence is CQGCFNITTVFSHSQTVVVCGNC.

The protein belongs to the eukaryotic ribosomal protein eS27 family. Zn(2+) is required as a cofactor.

The sequence is that of Small ribosomal subunit protein eS27w (RPS27D) from Arabidopsis thaliana (Mouse-ear cress).